Reading from the N-terminus, the 259-residue chain is MLAKRIIPCLDVTGGRVVKGVNFLELRDAGDPVEIAARYNAQGADELTFLDITATSDGRDLILPIIEAVASQVFIPLTVGGGVRTVADVRRLLNAGADKTSFNSAAIADPQVINDASQKYGSQCIVVAIDAKRRSPEEAATRGAGWDVYSHGGRKNTGLDAVEWATEMVRRGAGEILLTSMDRDGTKSGFDLALTRAVSDAVNVPVIASGGVGSLDDLADGIQTGGADAVLAASIFHYGEHTVGEAKARMAARGIPVRT.

Active-site residues include Asp11 and Asp130.

This sequence belongs to the HisA/HisF family. Heterodimer of HisH and HisF.

The protein localises to the cytoplasm. It catalyses the reaction 5-[(5-phospho-1-deoxy-D-ribulos-1-ylimino)methylamino]-1-(5-phospho-beta-D-ribosyl)imidazole-4-carboxamide + L-glutamine = D-erythro-1-(imidazol-4-yl)glycerol 3-phosphate + 5-amino-1-(5-phospho-beta-D-ribosyl)imidazole-4-carboxamide + L-glutamate + H(+). It functions in the pathway amino-acid biosynthesis; L-histidine biosynthesis; L-histidine from 5-phospho-alpha-D-ribose 1-diphosphate: step 5/9. Functionally, IGPS catalyzes the conversion of PRFAR and glutamine to IGP, AICAR and glutamate. The HisF subunit catalyzes the cyclization activity that produces IGP and AICAR from PRFAR using the ammonia provided by the HisH subunit. This is Imidazole glycerol phosphate synthase subunit HisF from Variovorax paradoxus (strain S110).